The primary structure comprises 277 residues: Sarcosine/dimethylglycine N-methyltransferase (277 aa).

The protein belongs to the methyltransferase superfamily. Monomer.

It catalyses the reaction sarcosine + 2 S-adenosyl-L-methionine = glycine betaine + 2 S-adenosyl-L-homocysteine + 2 H(+). The catalysed reaction is sarcosine + S-adenosyl-L-methionine = N,N-dimethylglycine + S-adenosyl-L-homocysteine + H(+). The enzyme catalyses N,N-dimethylglycine + S-adenosyl-L-methionine = glycine betaine + S-adenosyl-L-homocysteine + H(+). The protein operates within amine and polyamine biosynthesis; betaine biosynthesis via glycine pathway; betaine from glycine: step 2/3. Its pathway is amine and polyamine biosynthesis; betaine biosynthesis via glycine pathway; betaine from glycine: step 3/3. With respect to regulation, inhibited by n-butylic acid and S-adenosyl-L-homocysteine. Catalyzes the methylation of sarcosine and dimethylglycine to dimethylglycine and betaine, respectively, with S-adenosylmethionine (AdoMet) acting as the methyl donor. Activity with sarcosine is much weaker than activity with dimethylglycine. The polypeptide is Sarcosine/dimethylglycine N-methyltransferase (Aphanothece halophytica).